A 114-amino-acid chain; its full sequence is RNA polymerase-binding protein RbpA (114 aa).

Belongs to the RNA polymerase-binding protein RbpA family. As to quaternary structure, monomer. Forms a complex with the RNAP catalytic core, specifically with the beta subunit (RpoB); its binding site may overlap with that of Rif. May bind free principal sigma factors.

Its function is as follows. Binds to RNA polymerase (RNAP), probably stimulating transcriptions from principal, but not alternative sigma factor promoters. Partially restores transcription in the presence of rifampicin (Rif) in vitro; overexpression leads to an increase in the Rif tolerance in vivo, with smaller colonies. Seems to act by removing Rif from its binding site and preventing its further binding. No longer stimulates transcription in Rif-resistant RNA polymerase (with mutations in rpoB). This chain is RNA polymerase-binding protein RbpA, found in Mycolicibacterium smegmatis (strain ATCC 700084 / mc(2)155) (Mycobacterium smegmatis).